A 329-amino-acid chain; its full sequence is MDYLTMFYDGWRDLMDNKSDPRTRDYPLMSSPFPTIAISLTYAYIVKVLGPKLMENRKPFELRKVLIVYNAAQVIFSAWLFYESCIGGWLNGYNLRCEPVNYSYSPKAIRTAEGCWWYYFSKFTEFFDTFFFVMRKRYDQVSTLHVIHHGIMPVSVWWGVKFTPGGHSTFFGFLNTFVHIFMYAYYMLAAMGPKVQKYLWWKKYLTVMQMIQFVLVMVHSFQLFFKNDCNYPIGFAYFIGAHAVMFYFLFSNFYKRAYVKRDGKDKASVKANGHANGHVKALKDGDVAPTSNGQANGFHNTFSKFTTDMCNPALNSSTRQRVLVNAGNK.

The next 7 membrane-spanning stretches (helical) occupy residues 26-46 (YPLM…AYIV), 66-86 (LIVY…ESCI), 114-134 (GCWW…FFVM), 146-166 (VIHH…TPGG), 170-190 (FFGF…MLAA), 205-225 (LTVM…QLFF), and 233-253 (IGFA…FSNF).

It belongs to the ELO family.

The protein resides in the membrane. It carries out the reaction a very-long-chain acyl-CoA + malonyl-CoA + H(+) = a very-long-chain 3-oxoacyl-CoA + CO2 + CoA. Catalyzes the first and rate-limiting reaction of the four reactions that constitute the long-chain fatty acids elongation cycle. This endoplasmic reticulum-bound enzymatic process allows the addition of 2 carbons to the chain of long- and very long-chain fatty acids (VLCFAs) per cycle. The chain is Very long chain fatty acid elongase 7 from Drosophila melanogaster (Fruit fly).